Here is a 560-residue protein sequence, read N- to C-terminus: Protein DETOXIFICATION 45, chloroplastic (560 aa).

The transit peptide at Met1–Lys75 directs the protein to the chloroplast. The next 12 membrane-spanning stretches (helical) occupy residues Leu109–Met129, Val147–Ala167, Ala209–Gly229, Phe250–Ile270, Pro280–Tyr300, Gly308–Leu328, Phe353–Ala373, Val389–Ser411, Phe426–Phe446, Gly466–Leu486, Tyr495–Pro515, and Val523–Met543.

It belongs to the multi antimicrobial extrusion (MATE) (TC 2.A.66.1) family. Ubiquitous.

The protein localises to the plastid. It localises to the chloroplast membrane. In Arabidopsis thaliana (Mouse-ear cress), this protein is Protein DETOXIFICATION 45, chloroplastic.